Reading from the N-terminus, the 105-residue chain is uncharacterized protein (105 aa).

The next 3 helical transmembrane spans lie at 3-23 (ISPL…QALF), 41-61 (DLVN…ALVS), and 63-83 (AFPV…TFIY).

It is found in the cell membrane. This is an uncharacterized protein from Methanocaldococcus jannaschii (strain ATCC 43067 / DSM 2661 / JAL-1 / JCM 10045 / NBRC 100440) (Methanococcus jannaschii).